We begin with the raw amino-acid sequence, 590 residues long: Protein Spindly (590 aa).

Residues 1–401 (MSDLEDEIKV…SMARMKALSE (401 aa)) adopt a coiled-coil conformation. The interval 446 to 590 (NKAQVQKRRR…KTMANECAQQ (145 aa)) is disordered. 2 stretches are compositionally biased toward basic and acidic residues: residues 483 to 497 (SNEK…HPVE) and 518 to 527 (RESKSVRICE). Polar residues-rich tracts occupy residues 541-554 (VNDS…QTHQ) and 572-590 (QQPT…CAQQ).

Belongs to the Spindly family.

It is found in the chromosome. The protein resides in the centromere. The protein localises to the kinetochore. Required for the localization of dynein and dynactin to the mitotic kintochore. Dynein is believed to control the initial lateral interaction between the kinetochore and spindle microtubules and to facilitate the subsequent formation of end-on kinetochore-microtubule attachments mediated by the NDC80 complex. May act as an adapter protein linking the dynein motor complex to various cargos. This is Protein Spindly (spdl1) from Danio rerio (Zebrafish).